The sequence spans 426 residues: Enolase (426 aa).

Gln162 serves as a coordination point for (2R)-2-phosphoglycerate. Glu204 serves as the catalytic Proton donor. Asp241, Glu284, and Asp311 together coordinate Mg(2+). (2R)-2-phosphoglycerate-binding residues include Lys336, Arg365, Ser366, and Lys387. Lys336 (proton acceptor) is an active-site residue.

This sequence belongs to the enolase family. Component of the RNA degradosome, a multiprotein complex involved in RNA processing and mRNA degradation. Mg(2+) is required as a cofactor.

It localises to the cytoplasm. Its subcellular location is the secreted. It is found in the cell surface. The catalysed reaction is (2R)-2-phosphoglycerate = phosphoenolpyruvate + H2O. It functions in the pathway carbohydrate degradation; glycolysis; pyruvate from D-glyceraldehyde 3-phosphate: step 4/5. Its function is as follows. Catalyzes the reversible conversion of 2-phosphoglycerate (2-PG) into phosphoenolpyruvate (PEP). It is essential for the degradation of carbohydrates via glycolysis. This Hydrogenovibrio crunogenus (strain DSM 25203 / XCL-2) (Thiomicrospira crunogena) protein is Enolase.